The sequence spans 228 residues: Uracil-DNA glycosylase (228 aa).

Catalysis depends on Asp-65, which acts as the Proton acceptor.

This sequence belongs to the uracil-DNA glycosylase (UDG) superfamily. UNG family.

It is found in the cytoplasm. The catalysed reaction is Hydrolyzes single-stranded DNA or mismatched double-stranded DNA and polynucleotides, releasing free uracil.. Its function is as follows. Excises uracil residues from the DNA which can arise as a result of misincorporation of dUMP residues by DNA polymerase or due to deamination of cytosine. The polypeptide is Uracil-DNA glycosylase (Lacticaseibacillus paracasei (strain ATCC 334 / BCRC 17002 / CCUG 31169 / CIP 107868 / KCTC 3260 / NRRL B-441) (Lactobacillus paracasei)).